A 406-amino-acid polypeptide reads, in one-letter code: LIM/homeobox protein Lhx1 (406 aa).

LIM zinc-binding domains are found at residues 4 to 54 and 63 to 117; these read CAGC…CKND and CAGC…CKED. Disordered regions lie at residues 128 to 187 and 293 to 374; these read NSLH…RTTI and YDFF…EVFG. Low complexity predominate over residues 137–148; that stretch reads SDPSLSPDSQDP. Residues 151-167 are compositionally biased toward basic and acidic residues; sequence DDAKDSESANVSDKEAG. Ser162 is subject to Phosphoserine. A DNA-binding region (homeobox) is located at residues 180–239; that stretch reads RRGPRTTIKAKQLETLKAAFAATPKPTRHIREQLAQETGLNMRVIQVWFQNRRSKERRMK. The segment covering 315–327 has biased composition (low complexity); sequence PSSGPSGTPLGGL. Residues 352-362 show a composition bias toward pro residues; that stretch reads GDSPSPEPSLP.

In terms of assembly, interacts with LDB1 via the tandem LIM domains. As to expression, expressed in the brain, thymus, and tonsils. Expressed in samples from patients with chronic myeloid leukemia (CML) and in 58% of acute myeloid leukemia (AML) cell lines.

The protein localises to the nucleus. Potential transcription factor. May play a role in early mesoderm formation and later in lateral mesoderm differentiation and neurogenesis. This Homo sapiens (Human) protein is LIM/homeobox protein Lhx1 (LHX1).